We begin with the raw amino-acid sequence, 420 residues long: Protein Rv2184c (420 aa).

Belongs to the arsA ATPase family.

The sequence is that of Protein Rv2184c from Mycobacterium tuberculosis (strain ATCC 25618 / H37Rv).